Here is a 545-residue protein sequence, read N- to C-terminus: Chaperonin GroEL (545 aa).

ATP is bound by residues 29–32 (TLGP), Lys50, 86–90 (DGTTT), Gly413, 479–481 (NAA), and Asp496. The interval 525-545 (KPEKEKAPAAAGAPDMGGMDF) is disordered. The segment covering 532–545 (PAAAGAPDMGGMDF) has biased composition (low complexity).

Belongs to the chaperonin (HSP60) family. Forms a cylinder of 14 subunits composed of two heptameric rings stacked back-to-back. Interacts with the co-chaperonin GroES.

The protein resides in the cytoplasm. The catalysed reaction is ATP + H2O + a folded polypeptide = ADP + phosphate + an unfolded polypeptide.. Its function is as follows. Together with its co-chaperonin GroES, plays an essential role in assisting protein folding. The GroEL-GroES system forms a nano-cage that allows encapsulation of the non-native substrate proteins and provides a physical environment optimized to promote and accelerate protein folding. The sequence is that of Chaperonin GroEL from Deinococcus geothermalis (strain DSM 11300 / CIP 105573 / AG-3a).